A 250-amino-acid polypeptide reads, in one-letter code: 3-deoxy-manno-octulosonate cytidylyltransferase (250 aa).

It belongs to the KdsB family.

It is found in the cytoplasm. The enzyme catalyses 3-deoxy-alpha-D-manno-oct-2-ulosonate + CTP = CMP-3-deoxy-beta-D-manno-octulosonate + diphosphate. It functions in the pathway nucleotide-sugar biosynthesis; CMP-3-deoxy-D-manno-octulosonate biosynthesis; CMP-3-deoxy-D-manno-octulosonate from 3-deoxy-D-manno-octulosonate and CTP: step 1/1. Its pathway is bacterial outer membrane biogenesis; lipopolysaccharide biosynthesis. In terms of biological role, activates KDO (a required 8-carbon sugar) for incorporation into bacterial lipopolysaccharide in Gram-negative bacteria. The chain is 3-deoxy-manno-octulosonate cytidylyltransferase from Rhodopirellula baltica (strain DSM 10527 / NCIMB 13988 / SH1).